A 371-amino-acid polypeptide reads, in one-letter code: DNA repair and recombination protein rti1 (371 aa).

Positions isoleucine 346–lysine 371 are disordered. Residues serine 358–lysine 371 are compositionally biased toward polar residues.

The protein belongs to the RAD52 family. As to quaternary structure, interacts with rph51 and rph54.

Its function is as follows. Active in the repair of DNA damage and in mating-type switching. Probably involved in the repair of DNA double-strands breaks. Has a role in promoting S phase completion. This is DNA repair and recombination protein rti1 (rti1) from Schizosaccharomyces pombe (strain 972 / ATCC 24843) (Fission yeast).